We begin with the raw amino-acid sequence, 494 residues long: Probable cytosol aminopeptidase (494 aa).

2 residues coordinate Mn(2+): Lys260 and Asp265. Lys272 is an active-site residue. 3 residues coordinate Mn(2+): Asp283, Asp342, and Glu344. Arg346 is a catalytic residue.

It belongs to the peptidase M17 family. Mn(2+) serves as cofactor.

The protein resides in the cytoplasm. It catalyses the reaction Release of an N-terminal amino acid, Xaa-|-Yaa-, in which Xaa is preferably Leu, but may be other amino acids including Pro although not Arg or Lys, and Yaa may be Pro. Amino acid amides and methyl esters are also readily hydrolyzed, but rates on arylamides are exceedingly low.. The catalysed reaction is Release of an N-terminal amino acid, preferentially leucine, but not glutamic or aspartic acids.. Presumably involved in the processing and regular turnover of intracellular proteins. Catalyzes the removal of unsubstituted N-terminal amino acids from various peptides. The polypeptide is Probable cytosol aminopeptidase (Bacillus cereus (strain ZK / E33L)).